Reading from the N-terminus, the 975-residue chain is Translation initiation factor IF-2 (975 aa).

Residues 48–63 (DHLRKSHGATDGDKRK) are compositionally biased toward basic and acidic residues. Disordered stretches follow at residues 48–84 (DHLR…GKAR) and 98–388 (KRDD…QAPT). Low complexity predominate over residues 104-115 (ETGADQAQAQTD). A compositionally biased stretch (basic and acidic residues) spans 120–177 (AELKRREEEARREAELLEKQAQELRERQERLEREEAERRAREEAAEAERRRAEEEAAA). Residues 178 to 211 (KRAAAAQAEAAQQAAAAREQAQRAQSEPAEQSAQ) show a composition bias toward low complexity. Residues 212 to 263 (DEARAAAERAAQREAAKKAEDAAREAADKARAEQEEIRKRREAAEAEARAIR) are compositionally biased toward basic and acidic residues. Over residues 302 to 330 (KPAGEAAAARPAAKKPASGAPAPAAAPAG) the composition is skewed to low complexity. A compositionally biased stretch (gly residues) spans 359 to 372 (SSGGVDRGWRGGPK). Residues 475-644 (PRPPVVTVMG…LLQAEVLELK (170 aa)) form the tr-type G domain. The tract at residues 484–491 (GHVDHGKT) is G1. 484-491 (GHVDHGKT) is a binding site for GTP. The interval 509-513 (GITQH) is G2. Positions 530 to 533 (DTPG) are G3. Residues 530–534 (DTPGH) and 584–587 (NKID) each bind GTP. Positions 584–587 (NKID) are G4. The G5 stretch occupies residues 620–622 (SAK).

Belongs to the TRAFAC class translation factor GTPase superfamily. Classic translation factor GTPase family. IF-2 subfamily.

It localises to the cytoplasm. Its function is as follows. One of the essential components for the initiation of protein synthesis. Protects formylmethionyl-tRNA from spontaneous hydrolysis and promotes its binding to the 30S ribosomal subunits. Also involved in the hydrolysis of GTP during the formation of the 70S ribosomal complex. The chain is Translation initiation factor IF-2 from Burkholderia mallei (strain NCTC 10247).